The chain runs to 140 residues: Small ribosomal subunit protein uS12 (140 aa).

At Asp102 the chain carries 3-methylthioaspartic acid. The segment at 121–140 (ANRQQSRSKYGAKKPKAAKK) is disordered. Over residues 130 to 140 (YGAKKPKAAKK) the composition is skewed to basic residues.

It belongs to the universal ribosomal protein uS12 family. As to quaternary structure, part of the 30S ribosomal subunit. Contacts proteins S8 and S17. May interact with IF1 in the 30S initiation complex.

With S4 and S5 plays an important role in translational accuracy. Its function is as follows. Interacts with and stabilizes bases of the 16S rRNA that are involved in tRNA selection in the A site and with the mRNA backbone. Located at the interface of the 30S and 50S subunits, it traverses the body of the 30S subunit contacting proteins on the other side and probably holding the rRNA structure together. The combined cluster of proteins S8, S12 and S17 appears to hold together the shoulder and platform of the 30S subunit. This chain is Small ribosomal subunit protein uS12, found in Alkaliphilus oremlandii (strain OhILAs) (Clostridium oremlandii (strain OhILAs)).